We begin with the raw amino-acid sequence, 343 residues long: N-acetyl-gamma-glutamyl-phosphate reductase (343 aa).

The active site involves C147.

It belongs to the NAGSA dehydrogenase family. Type 1 subfamily.

The protein resides in the cytoplasm. The enzyme catalyses N-acetyl-L-glutamate 5-semialdehyde + phosphate + NADP(+) = N-acetyl-L-glutamyl 5-phosphate + NADPH + H(+). It participates in amino-acid biosynthesis; L-arginine biosynthesis; N(2)-acetyl-L-ornithine from L-glutamate: step 3/4. Functionally, catalyzes the NADPH-dependent reduction of N-acetyl-5-glutamyl phosphate to yield N-acetyl-L-glutamate 5-semialdehyde. The protein is N-acetyl-gamma-glutamyl-phosphate reductase of Listeria monocytogenes serotype 4a (strain HCC23).